Reading from the N-terminus, the 105-residue chain is Large ribosomal subunit protein uL23 (105 aa).

The protein belongs to the universal ribosomal protein uL23 family. In terms of assembly, part of the 50S ribosomal subunit. Contacts protein L29, and trigger factor when it is bound to the ribosome.

One of the early assembly proteins it binds 23S rRNA. One of the proteins that surrounds the polypeptide exit tunnel on the outside of the ribosome. Forms the main docking site for trigger factor binding to the ribosome. The sequence is that of Large ribosomal subunit protein uL23 from Chloroherpeton thalassium (strain ATCC 35110 / GB-78).